Here is a 400-residue protein sequence, read N- to C-terminus: Enoyl-[acyl-carrier-protein] reductase [NADH] 1 (400 aa).

NAD(+) contacts are provided by residues G48–Y53, F74–E75, D111–A112, and L139–A140. Y225 contributes to the substrate binding site. The Proton donor role is filled by Y235. Residues K244 and V273–T275 contribute to the NAD(+) site.

It belongs to the TER reductase family. As to quaternary structure, monomer.

It carries out the reaction a 2,3-saturated acyl-[ACP] + NAD(+) = a (2E)-enoyl-[ACP] + NADH + H(+). The protein operates within lipid metabolism; fatty acid biosynthesis. In terms of biological role, involved in the final reduction of the elongation cycle of fatty acid synthesis (FAS II). Catalyzes the reduction of a carbon-carbon double bond in an enoyl moiety that is covalently linked to an acyl carrier protein (ACP). This Vibrio vulnificus (strain CMCP6) protein is Enoyl-[acyl-carrier-protein] reductase [NADH] 1.